We begin with the raw amino-acid sequence, 180 residues long: ATP-dependent protease subunit HslV (180 aa).

Residue Thr-5 is part of the active site. Na(+) contacts are provided by Gly-161, Cys-164, and Thr-167.

The protein belongs to the peptidase T1B family. HslV subfamily. As to quaternary structure, a double ring-shaped homohexamer of HslV is capped on each side by a ring-shaped HslU homohexamer. The assembly of the HslU/HslV complex is dependent on binding of ATP.

It localises to the cytoplasm. The enzyme catalyses ATP-dependent cleavage of peptide bonds with broad specificity.. Its activity is regulated as follows. Allosterically activated by HslU binding. In terms of biological role, protease subunit of a proteasome-like degradation complex believed to be a general protein degrading machinery. This is ATP-dependent protease subunit HslV from Campylobacter jejuni subsp. jejuni serotype O:6 (strain 81116 / NCTC 11828).